Consider the following 368-residue polypeptide: Cyclic di-GMP phosphodiesterase TM_0186 (368 aa).

The 113-residue stretch at 2-114 folds into the Response regulatory domain; the sequence is TVLIVEDDDI…LLRLKITHAL (113 aa). Asp49 is modified (4-aspartylphosphate). Positions 148–345 constitute an HD-GYP domain; sequence YEDFLFEVLE…ITDVYRREKD (198 aa). Residues Glu169, His173, His205, Asp206, His234, His260, His261, and Asp289 each contribute to the a divalent metal cation site. Residues 341 to 368 form a disordered region; that stretch reads RREKDEDTSHNGGRSHQSSPGEGVEGIR. Positions 350–360 are enriched in polar residues; that stretch reads HNGGRSHQSSP.

It carries out the reaction 3',3'-c-di-GMP + 2 H2O = 2 GMP + 2 H(+). With respect to regulation, can function in vivo with either divalent iron or manganese occupying di- and trimetal sites. Dimetal is necessary and sufficient to catalyze conversion of c-di-GMP to pGpG, but conversion of pGpG to GMP requires an occupied trimetal site. Its function is as follows. Phosphodiesterase (PDE) that catalyzes the hydrolysis of cyclic diguanylate (c-di-GMP) to GMP. Hydrolyzes c-di-GMP to GMP in a two-step reaction, via the linear intermediate 5'-phosphoguanylyl(3'-&gt;5')guanosine (pGpG). This is Cyclic di-GMP phosphodiesterase TM_0186 from Thermotoga maritima (strain ATCC 43589 / DSM 3109 / JCM 10099 / NBRC 100826 / MSB8).